A 277-amino-acid chain; its full sequence is Phosphatidylglycerol--prolipoprotein diacylglyceryl transferase (277 aa).

The next 3 membrane-spanning stretches (helical) occupy residues 17–37, 63–83, and 101–121; these read LAIHWYGLSYLAAFGLFMLLG, ILFLGVAGVVLGGRLGYCLFY, and GGMAFHGGLLGVIVAMLWFAH. Arginine 146 contacts a 1,2-diacyl-sn-glycero-3-phospho-(1'-sn-glycerol). Transmembrane regions (helical) follow at residues 182–202, 209–229, and 234–254; these read SQVYQFLLEGLLLFVLLWLYA, GQVAAAFLVGYGVLRFIAEQF, and AFLGILALGMSMGQWLCLPMI.

The protein belongs to the Lgt family.

It localises to the cell inner membrane. The catalysed reaction is L-cysteinyl-[prolipoprotein] + a 1,2-diacyl-sn-glycero-3-phospho-(1'-sn-glycerol) = an S-1,2-diacyl-sn-glyceryl-L-cysteinyl-[prolipoprotein] + sn-glycerol 1-phosphate + H(+). It participates in protein modification; lipoprotein biosynthesis (diacylglyceryl transfer). In terms of biological role, catalyzes the transfer of the diacylglyceryl group from phosphatidylglycerol to the sulfhydryl group of the N-terminal cysteine of a prolipoprotein, the first step in the formation of mature lipoproteins. This is Phosphatidylglycerol--prolipoprotein diacylglyceryl transferase from Verminephrobacter eiseniae (strain EF01-2).